The sequence spans 355 residues: DNA-binding protein RHL1 (355 aa).

Disordered stretches follow at residues 1–26, 181–215, and 229–355; these read MVRA…KQRK, DFQG…VDNE, and IQVT…SSKA. Positions 14–23 are enriched in basic and acidic residues; sequence GGDKDDAESK. Low complexity-rich tracts occupy residues 230–246 and 260–274; these read QVTP…VTPV and AETS…SEGN. Composition is skewed to basic and acidic residues over residues 281–296 and 309–326; these read KPLL…REES and LPEE…KDSK. Low complexity predominate over residues 344–355; that stretch reads AGTSKAKSSSKA.

In terms of assembly, interacts with BIN4 and TOP6A, but not with TOP6B. In terms of tissue distribution, expressed inproliferating and endoreduplicating cells.

Its subcellular location is the nucleus. Functionally, component of the DNA topoisomerase VI complex involved in chromatin organization and progression of endoreduplication cycles. Binds to DNA. Required for endoreduplication beyond 8C. The sequence is that of DNA-binding protein RHL1 (RHL1) from Arabidopsis thaliana (Mouse-ear cress).